We begin with the raw amino-acid sequence, 223 residues long: Putative NAD(P)H nitroreductase SAB2397c (223 aa).

This sequence belongs to the nitroreductase family. FMN serves as cofactor.

This is Putative NAD(P)H nitroreductase SAB2397c from Staphylococcus aureus (strain bovine RF122 / ET3-1).